The sequence spans 454 residues: Zinc finger CCCH domain-containing protein 66 (454 aa).

Residues 1–23 are compositionally biased toward gly residues; that stretch reads MAAGAGAGGGGGEGDSNGGGTSP. A disordered region spans residues 1-30; the sequence is MAAGAGAGGGGGEGDSNGGGTSPGGVSAAA. C3H1-type zinc fingers lie at residues 66 to 94, 111 to 139, 157 to 185, 318 to 346, and 364 to 392; these read RIGE…HPPN, RVGQ…HPRE, RPNE…HPQP, RPDQ…HPKE, and RPGE…HPMG. The segment at 405 to 454 is disordered; the sequence is DVSSMHYQLSPSPGHPGILLDGGSGRSHRVPQSDSQQIPSGDGNAEREAS. Residues 434-443 are compositionally biased toward polar residues; sequence VPQSDSQQIP.

The sequence is that of Zinc finger CCCH domain-containing protein 66 from Oryza sativa subsp. japonica (Rice).